The following is a 210-amino-acid chain: Cuticle collagen 2C (210 aa).

Positions 11-210 (CTGGQAGPPG…GVFFEDGTRR (200 aa)) are disordered. Composition is skewed to pro residues over residues 40-76 (PGRP…PGEP) and 88-103 (DAPP…PGPP). Low complexity predominate over residues 105 to 122 (KAGAPGAAGQPGANAPSE). A compositionally biased stretch (pro residues) spans 123 to 144 (PLVPGPPGPPGPTGPEGPPGPN). Positions 167 to 179 (HPGAPGNAGHPGQ) are enriched in low complexity.

The protein belongs to the cuticular collagen family.

Nematode cuticles are composed largely of collagen-like proteins. The cuticle functions both as an exoskeleton and as a barrier to protect the worm from its environment. This Haemonchus contortus (Barber pole worm) protein is Cuticle collagen 2C (2C).